Here is a 659-residue protein sequence, read N- to C-terminus: Pseudouridylate synthase 7 homolog (659 aa).

Met-1 is subject to N-acetylmethionine. Polar residues-rich tracts occupy residues 1–10 and 39–54; these read MEMTEMTSVS and CPTT…SLPS. The interval 1-99 is disordered; that stretch reads MEMTEMTSVS…EEEEEEAESF (99 aa). Ser-10 carries the post-translational modification Phosphoserine. Positions 75–98 are enriched in acidic residues; that stretch reads PSEEEEEEDGLSEEEEEEEEEAES. Ser-125 is modified (phosphoserine). Residue Asp-292 is the Nucleophile of the active site. The 211-residue stretch at 368–578 folds into the TRUD domain; it reads GFINYYGMQR…SGAYRKIIIR (211 aa).

It belongs to the pseudouridine synthase TruD family. In terms of assembly, interacts with SIRT1.

It is found in the nucleus. The catalysed reaction is a uridine in tRNA = a pseudouridine in tRNA. The enzyme catalyses uridine(13) in tRNA = pseudouridine(13) in tRNA. It carries out the reaction a uridine in mRNA = a pseudouridine in mRNA. Pseudouridylate synthase that catalyzes pseudouridylation of RNAs. Acts as a regulator of protein synthesis in embryonic stem cells by mediating pseudouridylation of RNA fragments derived from tRNAs (tRFs): pseudouridylated tRFs inhibit translation by targeting the translation initiation complex. Also catalyzes pseudouridylation of mRNAs: mediates pseudouridylation of mRNAs with the consensus sequence 5'-UGUAG-3'. Acts as a regulator of pre-mRNA splicing by mediating pseudouridylation of pre-mRNAs at locations associated with alternatively spliced regions. Pseudouridylation of pre-mRNAs near splice sites directly regulates mRNA splicing and mRNA 3'-end processing. In addition to mRNAs and tRNAs, binds other types of RNAs, such as snRNAs, Y RNAs and vault RNAs, suggesting that it can catalyze pseudouridylation of many RNA types. In Bos taurus (Bovine), this protein is Pseudouridylate synthase 7 homolog.